A 1191-amino-acid chain; its full sequence is Solute carrier family 12 member 2 (1191 aa).

Residues 1–166 form a disordered region; sequence MEPAFPASSA…MSEGSLHSSG (166 aa). Residues 1 to 258 are Cytoplasmic-facing; that stretch reads MEPAFPASSA…ADNKGVVKFG (258 aa). 4 stretches are compositionally biased toward low complexity: residues 13–25, 59–69, 80–99, and 131–141; these read QSQS…AGQQ, KGQTAAQPAAA, AAAP…AAAA, and SASSAHGGHQP. The segment covering 142–155 has biased composition (polar residues); that stretch reads PSESMNGYPQNGDT. Phosphothreonine; by OXSR1 and STK39 occurs at positions 175, 179, and 184. Phosphothreonine occurs at positions 189 and 202. Residues 259–288 form a discontinuously helical membrane-spanning segment; sequence WIKGVLVRCMLNIWGVMLFIRLSWIVGHAG. Leu269 lines the Na(+) pocket. Residues Asn270 and Ile271 each coordinate K(+). Trp272 is a Na(+) binding site. Residues Gly273, Val274, and Met275 each coordinate chloride. The chain crosses the membrane as a helical span at residues 289-308; it reads IGLALLVIGTATVVTTITGL. Residues 309–339 lie on the Cytoplasmic side of the membrane; the sequence is STSAITTNGFVRGGGAYYLISRSLGPEFGGA. A helical membrane pass occupies residues 340 to 367; that stretch reads IGLIFAFANAVAVAMYVVGFAETVRDLL. A chloride-binding site is contributed by Phe344. Tyr355 serves as a coordination point for K(+). Topologically, residues 368–377 are extracellular; that stretch reads VEHNALMIDE. Residues 378–401 traverse the membrane as a helical segment; the sequence is MSDIRIIGSVTIVVLFGISVAGME. Over 402-404 the chain is Cytoplasmic; that stretch reads WEA. Residues 405 to 426 traverse the membrane as a helical segment; the sequence is KAQIVLLGILLLAIVNFTVGTF. Topologically, residues 427–458 are extracellular; it reads IPANDKRAKGFFNYRGEIFSENFVPDFRDGED. A discontinuously helical transmembrane segment spans residues 459-476; the sequence is FFSVFAIFFPAATGILAG. 3 residues coordinate K(+): Pro468, Ala469, and Thr471. 2 residues coordinate chloride: Pro468 and Ala469. The chloride site is built by Gly472 and Ile473. Topologically, residues 477 to 491 are cytoplasmic; it reads ANISGDLADPQLAIP. A helical transmembrane segment spans residues 492–513; sequence KGTLLAILITTIVYAGAAVSVG. The Extracellular segment spans residues 514 to 571; the sequence is SCIVREATGNLTDAIIPGTVTNCTNVACKLGFNFSSCATNKCSYGLMNDFQVMSLVSG. 2 N-linked (GlcNAc...) asparagine glycosylation sites follow: Asn523 and Asn535. A disulfide bridge connects residues Cys536 and Cys541. An N-linked (GlcNAc...) asparagine glycan is attached at Asn546. A disulfide bond links Cys550 and Cys555. The helical transmembrane segment at 572–596 threads the bilayer; that stretch reads FGPLITAGIFSATLSSALASLVSAP. Residues Ala583, Ser586, and Ser587 each coordinate Na(+). Topologically, residues 597 to 624 are cytoplasmic; it reads KIFQALCKDNIYPGLHVFSVGYGKNNEP. A run of 2 helical transmembrane segments spans residues 625-645 and 646-664; these read LRGY…AELN and VIAP…LINF. Residues Phe655 and Tyr659 each coordinate chloride. Residues 665-687 are Cytoplasmic-facing; that stretch reads SVFHASLAKSPGWRPAFRFYNMW. Helical transmembrane passes span 688-705 and 706-718; these read ISLI…VINW and WAAL…VLAL. Topologically, residues 719–1191 are cytoplasmic; sequence YIYVTYKKPD…NHQSVLTFYS (473 aa). The segment at 734–751 is scissor helix; it reads STQALTYLNALQHAIRLT. The segment at 929 to 972 is disordered; sequence HSDADSSKPSSKSVSETNSPAVCQDQKDEEDDGKASTQPLLKKE. The span at 935–948 shows a compositional bias: low complexity; it reads SKPSSKSVSETNSP. Position 1114 is a phosphothreonine (Thr1114).

This sequence belongs to the SLC12A transporter family. Homodimer. Phosphorylated at Thr-175, Thr-179 and Thr-184 by OXSR1/OSR1 and STK39/SPAK downstream of WNK kinases (WNK1, WNK2, WNK3 or WNK4), promoting its activity. In terms of tissue distribution, strongly expressed in rectal gland, brain, gill and intestine. Also detected at lower levels in heart, kidney, and testis.

It localises to the basolateral cell membrane. It catalyses the reaction K(+)(out) + 2 chloride(out) + Na(+)(out) = K(+)(in) + 2 chloride(in) + Na(+)(in). With respect to regulation, activated following phosphorylation by OXSR1/OSR1 and STK39/SPAK. Inhibited by bumetanide. In terms of biological role, cation-chloride cotransporter which mediates the electroneutral transport of chloride, potassium and/or sodium ions across the membrane. Plays a vital role in the regulation of ionic balance and cell volume. This is Solute carrier family 12 member 2 (SLC12A2) from Squalus acanthias (Spiny dogfish).